Reading from the N-terminus, the 177-residue chain is Probable inosine/xanthosine triphosphatase (177 aa).

It belongs to the YjjX NTPase family. Homodimer. It depends on Mg(2+) as a cofactor. Mn(2+) is required as a cofactor.

The enzyme catalyses XTP + H2O = XDP + phosphate + H(+). The catalysed reaction is ITP + H2O = IDP + phosphate + H(+). Its function is as follows. Phosphatase that hydrolyzes non-canonical purine nucleotides such as XTP and ITP to their respective diphosphate derivatives. Probably excludes non-canonical purines from DNA/RNA precursor pool, thus preventing their incorporation into DNA/RNA and avoiding chromosomal lesions. In Pyrobaculum islandicum (strain DSM 4184 / JCM 9189 / GEO3), this protein is Probable inosine/xanthosine triphosphatase.